A 201-amino-acid chain; its full sequence is Ribonuclease HII (201 aa).

Residues 15–201 (AIIAGVDEAG…FAPIKAYGAP (187 aa)) form the RNase H type-2 domain. The a divalent metal cation site is built by aspartate 21, glutamate 22, and aspartate 113.

It belongs to the RNase HII family. The cofactor is Mn(2+). Mg(2+) serves as cofactor.

The protein localises to the cytoplasm. It catalyses the reaction Endonucleolytic cleavage to 5'-phosphomonoester.. Its function is as follows. Endonuclease that specifically degrades the RNA of RNA-DNA hybrids. The protein is Ribonuclease HII of Bordetella pertussis (strain Tohama I / ATCC BAA-589 / NCTC 13251).